Consider the following 20-residue polypeptide: Unknown protein NF007 from 2D-PAGE (20 aa).

In Naegleria fowleri (Brain eating amoeba), this protein is Unknown protein NF007 from 2D-PAGE.